We begin with the raw amino-acid sequence, 695 residues long: Elongation factor G 2 (695 aa).

In terms of domain architecture, tr-type G spans 5–280 (SLYRNIGIFA…AVVDYLPSPT (276 aa)). Residues 14 to 21 (AHVDAGKT), 78 to 82 (DTPGH), and 132 to 135 (NKLD) contribute to the GTP site.

Belongs to the TRAFAC class translation factor GTPase superfamily. Classic translation factor GTPase family. EF-G/EF-2 subfamily.

Its subcellular location is the cytoplasm. Its function is as follows. Catalyzes the GTP-dependent ribosomal translocation step during translation elongation. During this step, the ribosome changes from the pre-translocational (PRE) to the post-translocational (POST) state as the newly formed A-site-bound peptidyl-tRNA and P-site-bound deacylated tRNA move to the P and E sites, respectively. Catalyzes the coordinated movement of the two tRNA molecules, the mRNA and conformational changes in the ribosome. The polypeptide is Elongation factor G 2 (Vibrio cholerae serotype O1 (strain ATCC 39315 / El Tor Inaba N16961)).